The chain runs to 376 residues: Probable deoxyhypusine synthase (376 aa).

Residues 105-109, 131-133, glutamate 137, and aspartate 238 contribute to the NAD(+) site; these read SNLVS and TAG. 136 to 137 lines the spermidine pocket; the sequence is EE. Aspartate 243 is a spermidine binding site. Glycine 283 lines the NAD(+) pocket. Spermidine is bound at residue histidine 288. 308–309 is an NAD(+) binding site; it reads TG. Residues 314 to 316 and 323 to 329 contribute to the spermidine site; these read GSD and EAVSWGK. Catalysis depends on lysine 329, which acts as the Nucleophile. 342–343 contacts NAD(+); it reads EA.

The protein belongs to the deoxyhypusine synthase family. It depends on NAD(+) as a cofactor.

The enzyme catalyses [eIF5A protein]-L-lysine + spermidine = [eIF5A protein]-deoxyhypusine + propane-1,3-diamine. The protein operates within protein modification; eIF5A hypusination. In terms of biological role, catalyzes the NAD-dependent oxidative cleavage of spermidine and the subsequent transfer of the butylamine moiety of spermidine to the epsilon-amino group of a critical lysine residue of the eIF-5A precursor protein to form the intermediate deoxyhypusine residue. This is the first step of the post-translational modification of that lysine into an unusual amino acid residue named hypusine. Hypusination is unique to mature eIF-5A factor and is essential for its function. This is Probable deoxyhypusine synthase (dhps) from Dictyostelium discoideum (Social amoeba).